The primary structure comprises 95 residues: Aspartyl/glutamyl-tRNA(Asn/Gln) amidotransferase subunit C (95 aa).

Belongs to the GatC family. In terms of assembly, heterotrimer of A, B and C subunits.

It catalyses the reaction L-glutamyl-tRNA(Gln) + L-glutamine + ATP + H2O = L-glutaminyl-tRNA(Gln) + L-glutamate + ADP + phosphate + H(+). It carries out the reaction L-aspartyl-tRNA(Asn) + L-glutamine + ATP + H2O = L-asparaginyl-tRNA(Asn) + L-glutamate + ADP + phosphate + 2 H(+). Its function is as follows. Allows the formation of correctly charged Asn-tRNA(Asn) or Gln-tRNA(Gln) through the transamidation of misacylated Asp-tRNA(Asn) or Glu-tRNA(Gln) in organisms which lack either or both of asparaginyl-tRNA or glutaminyl-tRNA synthetases. The reaction takes place in the presence of glutamine and ATP through an activated phospho-Asp-tRNA(Asn) or phospho-Glu-tRNA(Gln). The polypeptide is Aspartyl/glutamyl-tRNA(Asn/Gln) amidotransferase subunit C (Rhizobium etli (strain ATCC 51251 / DSM 11541 / JCM 21823 / NBRC 15573 / CFN 42)).